The following is a 560-amino-acid chain: Dihydroxy-acid dehydratase (560 aa).

Cys52 provides a ligand contact to [2Fe-2S] cluster. A Mg(2+)-binding site is contributed by Asp84. [2Fe-2S] cluster is bound at residue Cys125. Mg(2+) is bound by residues Asp126 and Lys127. N6-carboxylysine is present on Lys127. Cys197 serves as a coordination point for [2Fe-2S] cluster. Glu448 contributes to the Mg(2+) binding site. The active-site Proton acceptor is the Ser474.

The protein belongs to the IlvD/Edd family. In terms of assembly, homodimer. [2Fe-2S] cluster is required as a cofactor. The cofactor is Mg(2+).

It carries out the reaction (2R)-2,3-dihydroxy-3-methylbutanoate = 3-methyl-2-oxobutanoate + H2O. It catalyses the reaction (2R,3R)-2,3-dihydroxy-3-methylpentanoate = (S)-3-methyl-2-oxopentanoate + H2O. Its pathway is amino-acid biosynthesis; L-isoleucine biosynthesis; L-isoleucine from 2-oxobutanoate: step 3/4. The protein operates within amino-acid biosynthesis; L-valine biosynthesis; L-valine from pyruvate: step 3/4. In terms of biological role, functions in the biosynthesis of branched-chain amino acids. Catalyzes the dehydration of (2R,3R)-2,3-dihydroxy-3-methylpentanoate (2,3-dihydroxy-3-methylvalerate) into 2-oxo-3-methylpentanoate (2-oxo-3-methylvalerate) and of (2R)-2,3-dihydroxy-3-methylbutanoate (2,3-dihydroxyisovalerate) into 2-oxo-3-methylbutanoate (2-oxoisovalerate), the penultimate precursor to L-isoleucine and L-valine, respectively. In Francisella tularensis subsp. tularensis (strain WY96-3418), this protein is Dihydroxy-acid dehydratase.